The chain runs to 309 residues: L-lactate dehydrogenase (309 aa).

NAD(+)-binding positions include Val12, Asp33, Arg38, Tyr63, and 77-78; that span reads GA. Residues Gln80, Arg86, and 118-121 each bind substrate; that span reads NPVD. NAD(+)-binding positions include 116 to 118 and Ser141; that span reads ATN. 146 to 149 is a binding site for substrate; the sequence is DSAR. Residues Arg151 and His166 each contribute to the beta-D-fructose 1,6-bisphosphate site. Residue His173 is the Proton acceptor of the active site. Position 219 is a phosphotyrosine (Tyr219). Position 228 (Thr228) interacts with substrate.

This sequence belongs to the LDH/MDH superfamily. LDH family. Homotetramer.

The protein localises to the cytoplasm. It carries out the reaction (S)-lactate + NAD(+) = pyruvate + NADH + H(+). Its pathway is fermentation; pyruvate fermentation to lactate; (S)-lactate from pyruvate: step 1/1. With respect to regulation, allosterically activated by fructose 1,6-bisphosphate (FBP). Functionally, catalyzes the conversion of lactate to pyruvate. This chain is L-lactate dehydrogenase, found in Nitratidesulfovibrio vulgaris (strain ATCC 29579 / DSM 644 / CCUG 34227 / NCIMB 8303 / VKM B-1760 / Hildenborough) (Desulfovibrio vulgaris).